We begin with the raw amino-acid sequence, 243 residues long: 3-deoxy-manno-octulosonate cytidylyltransferase (243 aa).

This sequence belongs to the KdsB family.

It localises to the cytoplasm. It catalyses the reaction 3-deoxy-alpha-D-manno-oct-2-ulosonate + CTP = CMP-3-deoxy-beta-D-manno-octulosonate + diphosphate. It participates in nucleotide-sugar biosynthesis; CMP-3-deoxy-D-manno-octulosonate biosynthesis; CMP-3-deoxy-D-manno-octulosonate from 3-deoxy-D-manno-octulosonate and CTP: step 1/1. It functions in the pathway bacterial outer membrane biogenesis; lipopolysaccharide biosynthesis. Its function is as follows. Activates KDO (a required 8-carbon sugar) for incorporation into bacterial lipopolysaccharide in Gram-negative bacteria. The protein is 3-deoxy-manno-octulosonate cytidylyltransferase of Helicobacter pylori (strain G27).